The following is a 658-amino-acid chain: Threonine--tRNA ligase (658 aa).

Residues 1 to 64 (MSFSISLSFP…EQSGQVEIIT (64 aa)) enclose the TGS domain. A catalytic region spans residues 246 to 549 (DHRRLGREMD…LIENFAGHMP (304 aa)). Residues Cys-343, His-394, and His-526 each contribute to the Zn(2+) site.

Belongs to the class-II aminoacyl-tRNA synthetase family. Homodimer. Zn(2+) is required as a cofactor.

It localises to the cytoplasm. The enzyme catalyses tRNA(Thr) + L-threonine + ATP = L-threonyl-tRNA(Thr) + AMP + diphosphate + H(+). Catalyzes the attachment of threonine to tRNA(Thr) in a two-step reaction: L-threonine is first activated by ATP to form Thr-AMP and then transferred to the acceptor end of tRNA(Thr). Also edits incorrectly charged L-seryl-tRNA(Thr). The protein is Threonine--tRNA ligase of Bartonella bacilliformis (strain ATCC 35685 / KC583 / Herrer 020/F12,63).